A 119-amino-acid polypeptide reads, in one-letter code: Large ribosomal subunit protein bL19 (119 aa).

This sequence belongs to the bacterial ribosomal protein bL19 family.

Functionally, this protein is located at the 30S-50S ribosomal subunit interface and may play a role in the structure and function of the aminoacyl-tRNA binding site. The sequence is that of Large ribosomal subunit protein bL19 from Sulfurovum sp. (strain NBC37-1).